The primary structure comprises 415 residues: Serine hydroxymethyltransferase 2 (415 aa).

Residues L122 and 126–128 (GHL) each bind (6S)-5,6,7,8-tetrahydrofolate. K230 carries the N6-(pyridoxal phosphate)lysine modification.

It belongs to the SHMT family. Homodimer. Pyridoxal 5'-phosphate is required as a cofactor.

The protein localises to the cytoplasm. The enzyme catalyses (6R)-5,10-methylene-5,6,7,8-tetrahydrofolate + glycine + H2O = (6S)-5,6,7,8-tetrahydrofolate + L-serine. Its pathway is one-carbon metabolism; tetrahydrofolate interconversion. It functions in the pathway amino-acid biosynthesis; glycine biosynthesis; glycine from L-serine: step 1/1. Its function is as follows. Catalyzes the reversible interconversion of serine and glycine with tetrahydrofolate (THF) serving as the one-carbon carrier. This reaction serves as the major source of one-carbon groups required for the biosynthesis of purines, thymidylate, methionine, and other important biomolecules. Also exhibits THF-independent aldolase activity toward beta-hydroxyamino acids, producing glycine and aldehydes, via a retro-aldol mechanism. This chain is Serine hydroxymethyltransferase 2, found in Burkholderia lata (strain ATCC 17760 / DSM 23089 / LMG 22485 / NCIMB 9086 / R18194 / 383).